Here is a 256-residue protein sequence, read N- to C-terminus: Imidazole glycerol phosphate synthase subunit hisF1 (256 aa).

Active-site residues include D11 and D130.

The protein belongs to the HisA/HisF family. As to quaternary structure, heterodimer of HisH and HisF.

The protein localises to the cytoplasm. The enzyme catalyses 5-[(5-phospho-1-deoxy-D-ribulos-1-ylimino)methylamino]-1-(5-phospho-beta-D-ribosyl)imidazole-4-carboxamide + L-glutamine = D-erythro-1-(imidazol-4-yl)glycerol 3-phosphate + 5-amino-1-(5-phospho-beta-D-ribosyl)imidazole-4-carboxamide + L-glutamate + H(+). Its pathway is amino-acid biosynthesis; L-histidine biosynthesis; L-histidine from 5-phospho-alpha-D-ribose 1-diphosphate: step 5/9. IGPS catalyzes the conversion of PRFAR and glutamine to IGP, AICAR and glutamate. The HisF subunit catalyzes the cyclization activity that produces IGP and AICAR from PRFAR using the ammonia provided by the HisH subunit. This is Imidazole glycerol phosphate synthase subunit hisF1 (hisF1) from Parasynechococcus marenigrum (strain WH8102).